A 137-amino-acid polypeptide reads, in one-letter code: ATP synthase epsilon chain, chloroplastic (137 aa).

It belongs to the ATPase epsilon chain family. In terms of assembly, F-type ATPases have 2 components, CF(1) - the catalytic core - and CF(0) - the membrane proton channel. CF(1) has five subunits: alpha(3), beta(3), gamma(1), delta(1), epsilon(1). CF(0) has three main subunits: a, b and c.

It is found in the plastid. It localises to the chloroplast thylakoid membrane. Functionally, produces ATP from ADP in the presence of a proton gradient across the membrane. This chain is ATP synthase epsilon chain, chloroplastic, found in Pinus koraiensis (Korean pine).